The primary structure comprises 203 residues: A-type ATP synthase subunit E (203 aa).

It belongs to the V-ATPase E subunit family. As to quaternary structure, has multiple subunits with at least A(3), B(3), C, D, E, F, H, I and proteolipid K(x).

The protein resides in the cell membrane. Functionally, component of the A-type ATP synthase that produces ATP from ADP in the presence of a proton gradient across the membrane. The chain is A-type ATP synthase subunit E from Thermococcus onnurineus (strain NA1).